The following is a 478-amino-acid chain: Protein FAM83E (478 aa).

The tract at residues 1–293 is DUF1669; that stretch reads MAASQLAALE…LYAASCPLPP (293 aa). 3 disordered regions span residues 292–334, 359–436, and 452–478; these read PPAP…PLAH, RART…LPPA, and DATF…GGQP. Positions 309–319 are enriched in basic residues; the sequence is RSPHRVSRRRS. The span at 379–388 shows a compositional bias: polar residues; it reads RLSQLSGSSD.

The protein belongs to the FAM83 family. As to quaternary structure, directly interacts (via DUF1669) with CSNK1A1, CSNK1A1L, CSNK1D and CSNK1E. May interact with RAF1.

The protein resides in the cytoplasm. Its subcellular location is the perinuclear region. Its function is as follows. May play a role in MAPK signaling. The sequence is that of Protein FAM83E from Homo sapiens (Human).